The primary structure comprises 440 residues: Glutamyl-tRNA reductase (440 aa).

Substrate-binding positions include 55–58, serine 115, 120–122, and glutamine 126; these read TCNR and ETQ. Cysteine 56 functions as the Nucleophile in the catalytic mechanism. Residue 199 to 204 participates in NADP(+) binding; it reads GSGEMG.

The protein belongs to the glutamyl-tRNA reductase family. In terms of assembly, homodimer.

The catalysed reaction is (S)-4-amino-5-oxopentanoate + tRNA(Glu) + NADP(+) = L-glutamyl-tRNA(Glu) + NADPH + H(+). Its pathway is porphyrin-containing compound metabolism; protoporphyrin-IX biosynthesis; 5-aminolevulinate from L-glutamyl-tRNA(Glu): step 1/2. Functionally, catalyzes the NADPH-dependent reduction of glutamyl-tRNA(Glu) to glutamate 1-semialdehyde (GSA). This is Glutamyl-tRNA reductase from Helicobacter hepaticus (strain ATCC 51449 / 3B1).